Consider the following 285-residue polypeptide: Seed agglutinin 2 (285 aa).

The first 31 residues, 1 to 31 (MASYKFKTQNSFLLLLSISFFFLLLLNKVNS), serve as a signal peptide directing secretion. An N-linked (GlcNAc...) asparagine glycan is attached at asparagine 147. Residues glutamate 156 and aspartate 158 each coordinate Mn(2+). 3 residues coordinate Ca(2+): aspartate 158, asparagine 162, and aspartate 166. Residues aspartate 166 and histidine 171 each coordinate Mn(2+).

Belongs to the leguminous lectin family. In terms of assembly, homotetramer. Post-translationally, mostly found in non-glycosylated form. Expressed in seed.

In terms of biological role, seed lectin. The polypeptide is Seed agglutinin 2 (Robinia pseudoacacia (Black locust)).